Consider the following 465-residue polypeptide: UDP-N-acetylmuramate--L-alanine ligase (465 aa).

115–121 (GAHGKTT) is a binding site for ATP.

The protein belongs to the MurCDEF family.

The protein resides in the cytoplasm. It carries out the reaction UDP-N-acetyl-alpha-D-muramate + L-alanine + ATP = UDP-N-acetyl-alpha-D-muramoyl-L-alanine + ADP + phosphate + H(+). Its pathway is cell wall biogenesis; peptidoglycan biosynthesis. Cell wall formation. The sequence is that of UDP-N-acetylmuramate--L-alanine ligase from Coxiella burnetii (strain CbuG_Q212) (Coxiella burnetii (strain Q212)).